A 500-amino-acid polypeptide reads, in one-letter code: L-arabinose isomerase (500 aa).

Residues E306, E333, H349, and H448 each contribute to the Mn(2+) site.

Belongs to the arabinose isomerase family. Requires Mn(2+) as cofactor.

It carries out the reaction beta-L-arabinopyranose = L-ribulose. The protein operates within carbohydrate degradation; L-arabinose degradation via L-ribulose; D-xylulose 5-phosphate from L-arabinose (bacterial route): step 1/3. Catalyzes the conversion of L-arabinose to L-ribulose. The polypeptide is L-arabinose isomerase (Shewanella sp. (strain ANA-3)).